The chain runs to 317 residues: Acetyl-coenzyme A carboxylase carboxyl transferase subunit alpha (317 aa).

The CoA carboxyltransferase C-terminal domain maps to 41-291 (KVDKLLRSTY…SMALDSALRD (251 aa)).

It belongs to the AccA family. As to quaternary structure, acetyl-CoA carboxylase is a heterohexamer composed of biotin carboxyl carrier protein (AccB), biotin carboxylase (AccC) and two subunits each of ACCase subunit alpha (AccA) and ACCase subunit beta (AccD).

It is found in the cytoplasm. It catalyses the reaction N(6)-carboxybiotinyl-L-lysyl-[protein] + acetyl-CoA = N(6)-biotinyl-L-lysyl-[protein] + malonyl-CoA. It participates in lipid metabolism; malonyl-CoA biosynthesis; malonyl-CoA from acetyl-CoA: step 1/1. Its function is as follows. Component of the acetyl coenzyme A carboxylase (ACC) complex. First, biotin carboxylase catalyzes the carboxylation of biotin on its carrier protein (BCCP) and then the CO(2) group is transferred by the carboxyltransferase to acetyl-CoA to form malonyl-CoA. This Paramagnetospirillum magneticum (strain ATCC 700264 / AMB-1) (Magnetospirillum magneticum) protein is Acetyl-coenzyme A carboxylase carboxyl transferase subunit alpha.